A 212-amino-acid chain; its full sequence is Orotate phosphoribosyltransferase (212 aa).

5-phospho-alpha-D-ribose 1-diphosphate contacts are provided by residues Arg97, Lys101, His103, and 123–131; that span reads EDLISTGGS. Ser127 serves as a coordination point for orotate.

Belongs to the purine/pyrimidine phosphoribosyltransferase family. PyrE subfamily. In terms of assembly, homodimer. Requires Mg(2+) as cofactor.

It carries out the reaction orotidine 5'-phosphate + diphosphate = orotate + 5-phospho-alpha-D-ribose 1-diphosphate. The protein operates within pyrimidine metabolism; UMP biosynthesis via de novo pathway; UMP from orotate: step 1/2. Its function is as follows. Catalyzes the transfer of a ribosyl phosphate group from 5-phosphoribose 1-diphosphate to orotate, leading to the formation of orotidine monophosphate (OMP). The sequence is that of Orotate phosphoribosyltransferase from Bacteroides thetaiotaomicron (strain ATCC 29148 / DSM 2079 / JCM 5827 / CCUG 10774 / NCTC 10582 / VPI-5482 / E50).